We begin with the raw amino-acid sequence, 63 residues long: Putative ankyrin repeat protein RF_p14 (63 aa).

2 ANK repeats span residues 11–43 and 44–63; these read KLNQ…CRDH and QGDT…ILDI.

This chain is Putative ankyrin repeat protein RF_p14, found in Rickettsia felis (strain ATCC VR-1525 / URRWXCal2) (Rickettsia azadi).